A 210-amino-acid chain; its full sequence is Acetoin utilization protein AcuA (210 aa).

An N-acetyltransferase domain is found at 19 to 189 (VLIEGPISPE…ANCLMARIGK (171 aa)).

It belongs to the acetyltransferase family. As to quaternary structure, monomer.

It participates in ketone degradation; acetoin degradation. Part of the acuABC operon, which is possibly involved in the breakdown of acetoin and butanediol. Acts as an acetyltransferase inactivating acetyl-CoA synthetase AcsA via acetylation at a Lys residue. This is Acetoin utilization protein AcuA from Bacillus licheniformis (strain ATCC 14580 / DSM 13 / JCM 2505 / CCUG 7422 / NBRC 12200 / NCIMB 9375 / NCTC 10341 / NRRL NRS-1264 / Gibson 46).